Consider the following 162-residue polypeptide: uncharacterized protein (162 aa).

The signal sequence occupies residues Met-1–Thr-21.

This is an uncharacterized protein from Caenorhabditis elegans.